The chain runs to 319 residues: Cytochrome c biogenesis protein CcsA (319 aa).

8 helical membrane-spanning segments follow: residues 9-29 (ILTHISFSIISIVITIFLISL), 48-68 (TFFCITGLLVTRWIYSGHFPL), 71-91 (LYESLIFLSWSFSVIHMVPYF), 98-118 (LSTITAPSTIFTQGFATSGLL), 143-163 (MILGYAALLCGSLLSVALLVI), 225-245 (IISLGFLFLTIGILSGAVWAN), 258-275 (ETWAFITWTLFAIYLHTR), and 286-306 (AIVASIGFLIIWICYFGVNLL).

This sequence belongs to the CcmF/CycK/Ccl1/NrfE/CcsA family. May interact with Ccs1.

Its subcellular location is the plastid. It is found in the chloroplast thylakoid membrane. In terms of biological role, required during biogenesis of c-type cytochromes (cytochrome c6 and cytochrome f) at the step of heme attachment. The chain is Cytochrome c biogenesis protein CcsA from Eucalyptus globulus subsp. globulus (Tasmanian blue gum).